Consider the following 87-residue polypeptide: RNA-binding protein Hfq (87 aa).

The Sm domain occupies 9–68; it reads DPFLNALRRERIPVSIFLVNGIKLQGKIQSFDQFVILLENTVNQMVYKHAISTVVPARAV.

This sequence belongs to the Hfq family. As to quaternary structure, homohexamer.

RNA chaperone that binds small regulatory RNA (sRNAs) and mRNAs to facilitate mRNA translational regulation in response to envelope stress, environmental stress and changes in metabolite concentrations. Also binds with high specificity to tRNAs. This Pseudoalteromonas translucida (strain TAC 125) protein is RNA-binding protein Hfq.